The following is a 57-amino-acid chain: Preprotein translocase subunit SecG (57 aa).

Residues 1-33 (MPSSKKKKENVPVMSMAGLIRYYEEEHEKYKVD) are Cytoplasmic-facing. The chain crosses the membrane as a helical span at residues 34-55 (PIYVIIASIVLVAVVVAVTKII). At 56–57 (PP) the chain is on the extracellular side.

It belongs to the SEC61-beta family. Component of the protein translocase complex. Heterotrimer consisting of alpha (SecY), beta (SecG) and gamma (SecE) subunits. Can form oligomers of the heterotrimer.

The protein localises to the cell membrane. Functionally, involved in protein export. The function of the beta subunit is unknown, but it may be involved in stabilization of the trimeric complex. This Metallosphaera sedula (strain ATCC 51363 / DSM 5348 / JCM 9185 / NBRC 15509 / TH2) protein is Preprotein translocase subunit SecG.